The chain runs to 475 residues: Ankyrin repeat, SAM and basic leucine zipper domain-containing protein 1 (475 aa).

The segment at 1–25 (MAASALRGLPVAGGGESSESEDDGW) is disordered. Residues serine 17, serine 18, and serine 20 each carry the phosphoserine modification. ANK repeat units follow at residues 45 to 74 (EKKE…SVDS), 78 to 107 (YGWT…NASF), 110 to 144 (DKQS…DPNV), 148 to 177 (RLMT…EVNT), 181 to 210 (NGYT…NKML), and 214 to 243 (DGKM…PLEG). The SAM domain maps to 272–334 (SYTAFGDLEV…KILAALKELQ (63 aa)).

Interacts with DDX4, PIWIL1, RANBP9 and TDRD1.

It is found in the cytoplasm. Plays a central role during spermatogenesis by repressing transposable elements and preventing their mobilization, which is essential for the germline integrity. Acts via the piRNA metabolic process, which mediates the repression of transposable elements during meiosis by forming complexes composed of piRNAs and Piwi proteins and governs the methylation and subsequent repression of transposons. Its association with pi-bodies suggests a participation in the primary piRNAs metabolic process. Required prior to the pachytene stage to facilitate the production of multiple types of piRNAs, including those associated with repeats involved in the regulation of retrotransposons. May act by mediating protein-protein interactions during germ cell maturation. This chain is Ankyrin repeat, SAM and basic leucine zipper domain-containing protein 1 (ASZ1), found in Pan troglodytes (Chimpanzee).